Reading from the N-terminus, the 624-residue chain is Matrilin-4 (624 aa).

Residues Met-1–Thr-21 form the signal peptide. In terms of domain architecture, VWFA 1 spans Asp-36 to Leu-215. Asn-71 carries N-linked (GlcNAc...) asparagine glycosylation. 4 consecutive EGF-like domains span residues Gly-217 to Leu-257, Ala-258 to Arg-298, Ala-299 to Arg-339, and Val-340 to Asp-380. Intrachain disulfides connect Cys-221–Cys-232, Cys-228–Cys-241, Cys-243–Cys-256, Cys-262–Cys-273, Cys-269–Cys-282, Cys-284–Cys-297, Cys-303–Cys-314, Cys-310–Cys-323, Cys-325–Cys-338, Cys-344–Cys-355, Cys-351–Cys-364, and Cys-366–Cys-379. N-linked (GlcNAc...) asparagine glycosylation is present at Asn-307. A VWFA 2 domain is found at Asp-388–Leu-563. Positions Glu-590 to Arg-623 form a coiled coil.

As to quaternary structure, interacts with COMP. In terms of tissue distribution, lung, brain, sternum, kidney and heart.

The protein localises to the secreted. Functionally, major component of the extracellular matrix of cartilage. The sequence is that of Matrilin-4 (Matn4) from Mus musculus (Mouse).